We begin with the raw amino-acid sequence, 360 residues long: Peptide chain release factor 1 (360 aa).

At Gln235 the chain carries N5-methylglutamine. Over residues 285–295 (RQAAEQTDMRR) the composition is skewed to basic and acidic residues. The tract at residues 285-309 (RQAAEQTDMRRNLLGSGDRSDKIRT) is disordered.

It belongs to the prokaryotic/mitochondrial release factor family. In terms of processing, methylated by PrmC. Methylation increases the termination efficiency of RF1.

It localises to the cytoplasm. Functionally, peptide chain release factor 1 directs the termination of translation in response to the peptide chain termination codons UAG and UAA. The polypeptide is Peptide chain release factor 1 (Haemophilus influenzae (strain 86-028NP)).